Reading from the N-terminus, the 212-residue chain is Floral homeotic protein PMADS 2 (212 aa).

One can recognise an MADS-box domain in the interval 3-58; it reads RGKIEIKRIENSSNRQVTYSKRRNGIIKKAKEITVLCDAKVSLIIFGNSGKMHEYC. In terms of domain architecture, K-box spans 84-170; sequence HENLSNEIDR…QYALHQKEMA (87 aa).

In terms of tissue distribution, predominantly expressed in petals and stamens, less in carpels and sepals.

The protein localises to the nucleus. Functionally, transcription factor involved in the genetic control of flower development. The chain is Floral homeotic protein PMADS 2 (PMADS2) from Petunia hybrida (Petunia).